Reading from the N-terminus, the 1279-residue chain is ATP-dependent helicase/nuclease subunit A (1279 aa).

The UvrD-like helicase ATP-binding domain maps to 4-499 (TKWTDEQRQA…VKLFKNFRSR (496 aa)). 25-32 (AGAGAGKT) serves as a coordination point for ATP. The UvrD-like helicase C-terminal domain occupies 526 to 853 (EEALKVGASY…RIMSIHKSKG (328 aa)).

It belongs to the helicase family. AddA subfamily. As to quaternary structure, heterodimer of AddA and AddB/RexB. Mg(2+) is required as a cofactor.

The catalysed reaction is Couples ATP hydrolysis with the unwinding of duplex DNA by translocating in the 3'-5' direction.. The enzyme catalyses ATP + H2O = ADP + phosphate + H(+). In terms of biological role, the heterodimer acts as both an ATP-dependent DNA helicase and an ATP-dependent, dual-direction single-stranded exonuclease. Recognizes the chi site generating a DNA molecule suitable for the initiation of homologous recombination. The AddA nuclease domain is required for chi fragment generation; this subunit has the helicase and 3' -&gt; 5' nuclease activities. In Clostridium botulinum (strain ATCC 19397 / Type A), this protein is ATP-dependent helicase/nuclease subunit A.